The following is a 468-amino-acid chain: Ribulose bisphosphate carboxylase large chain (468 aa).

An N6,N6,N6-trimethyllysine modification is found at K5. Substrate-binding residues include N114 and T164. The Proton acceptor role is filled by K166. Position 168 (K168) interacts with substrate. K192, D194, and E195 together coordinate Mg(2+). At K192 the chain carries N6-carboxylysine. H285 acts as the Proton acceptor in catalysis. Residues R286, H318, and S370 each coordinate substrate.

It belongs to the RuBisCO large chain family. Type I subfamily. In terms of assembly, heterohexadecamer of 8 large chains and 8 small chains; disulfide-linked. The disulfide link is formed within the large subunit homodimers. Requires Mg(2+) as cofactor. In terms of processing, the disulfide bond which can form in the large chain dimeric partners within the hexadecamer appears to be associated with oxidative stress and protein turnover.

The protein localises to the plastid. Its subcellular location is the chloroplast. The catalysed reaction is 2 (2R)-3-phosphoglycerate + 2 H(+) = D-ribulose 1,5-bisphosphate + CO2 + H2O. It carries out the reaction D-ribulose 1,5-bisphosphate + O2 = 2-phosphoglycolate + (2R)-3-phosphoglycerate + 2 H(+). Its function is as follows. RuBisCO catalyzes two reactions: the carboxylation of D-ribulose 1,5-bisphosphate, the primary event in carbon dioxide fixation, as well as the oxidative fragmentation of the pentose substrate in the photorespiration process. Both reactions occur simultaneously and in competition at the same active site. This chain is Ribulose bisphosphate carboxylase large chain, found in Salvia divinorum (Maria pastora).